We begin with the raw amino-acid sequence, 429 residues long: UDP-N-acetylglucosamine 1-carboxyvinyltransferase (429 aa).

Residue Lys-22 to Asn-23 participates in phosphoenolpyruvate binding. Arg-102 contacts UDP-N-acetyl-alpha-D-glucosamine. The active-site Proton donor is the Cys-126. Cys-126 bears the 2-(S-cysteinyl)pyruvic acid O-phosphothioketal mark. Residues Lys-171–Val-174, Asp-316, and Ile-338 contribute to the UDP-N-acetyl-alpha-D-glucosamine site.

It belongs to the EPSP synthase family. MurA subfamily.

The protein resides in the cytoplasm. The catalysed reaction is phosphoenolpyruvate + UDP-N-acetyl-alpha-D-glucosamine = UDP-N-acetyl-3-O-(1-carboxyvinyl)-alpha-D-glucosamine + phosphate. The protein operates within cell wall biogenesis; peptidoglycan biosynthesis. Its function is as follows. Cell wall formation. Adds enolpyruvyl to UDP-N-acetylglucosamine. The sequence is that of UDP-N-acetylglucosamine 1-carboxyvinyltransferase from Azorhizobium caulinodans (strain ATCC 43989 / DSM 5975 / JCM 20966 / LMG 6465 / NBRC 14845 / NCIMB 13405 / ORS 571).